The sequence spans 106 residues: Putative defensin-like protein 224 (106 aa).

An N-terminal signal peptide occupies residues 1–23 (MKTLSLFFTLVILISSCVSNLMA). Cystine bridges form between Cys-60-Cys-78, Cys-64-Cys-84, and Cys-68-Cys-86.

Belongs to the DEFL family.

It is found in the secreted. In Arabidopsis thaliana (Mouse-ear cress), this protein is Putative defensin-like protein 224.